We begin with the raw amino-acid sequence, 750 residues long: 5-methyltetrahydropteroyltriglutamate--homocysteine methyltransferase (750 aa).

Residues 15-18 (RELK) and Lys114 contribute to the 5-methyltetrahydropteroyltri-L-glutamate site. L-homocysteine-binding positions include 425–427 (IGS) and Glu478. Residues 425–427 (IGS) and Glu478 each bind L-methionine. Trp555 is a binding site for 5-methyltetrahydropteroyltri-L-glutamate. An L-homocysteine-binding site is contributed by Asp593. Asp593 provides a ligand contact to L-methionine. Glu599 provides a ligand contact to 5-methyltetrahydropteroyltri-L-glutamate. Zn(2+) is bound by residues His636, Cys638, and Glu660. Catalysis depends on His689, which acts as the Proton donor. Cys721 contacts Zn(2+).

This sequence belongs to the vitamin-B12 independent methionine synthase family. It depends on Zn(2+) as a cofactor.

The enzyme catalyses 5-methyltetrahydropteroyltri-L-glutamate + L-homocysteine = tetrahydropteroyltri-L-glutamate + L-methionine. It functions in the pathway amino-acid biosynthesis; L-methionine biosynthesis via de novo pathway; L-methionine from L-homocysteine (MetE route): step 1/1. Functionally, catalyzes the transfer of a methyl group from 5-methyltetrahydrofolate to homocysteine resulting in methionine formation. In Streptococcus gordonii (strain Challis / ATCC 35105 / BCRC 15272 / CH1 / DL1 / V288), this protein is 5-methyltetrahydropteroyltriglutamate--homocysteine methyltransferase.